Here is a 295-residue protein sequence, read N- to C-terminus: Putative fused nickel transport protein NikMN (295 aa).

8 helical membrane-spanning segments follow: residues 8-28, 39-59, 70-90, 98-118, 135-155, 175-195, 211-231, and 268-288; these read LDLS…GYSI, LFGI…PIPG, LAGI…VLTI, GGIT…VFVG, FIAG…EIGI, ALLG…IAAA, LAVI…AELV, and AGTL…GFAL.

Belongs to the CbiM family. NikM subfamily.

It is found in the cell membrane. Its function is as follows. May be involved in nickel transport. This chain is Putative fused nickel transport protein NikMN, found in Archaeoglobus fulgidus (strain ATCC 49558 / DSM 4304 / JCM 9628 / NBRC 100126 / VC-16).